A 189-amino-acid polypeptide reads, in one-letter code: Elongation factor P (189 aa).

The protein belongs to the elongation factor P family.

It localises to the cytoplasm. It functions in the pathway protein biosynthesis; polypeptide chain elongation. Its function is as follows. Involved in peptide bond synthesis. Stimulates efficient translation and peptide-bond synthesis on native or reconstituted 70S ribosomes in vitro. Probably functions indirectly by altering the affinity of the ribosome for aminoacyl-tRNA, thus increasing their reactivity as acceptors for peptidyl transferase. This Orientia tsutsugamushi (strain Ikeda) (Rickettsia tsutsugamushi) protein is Elongation factor P.